The chain runs to 1505 residues: ABC transporter C family member 13 (1505 aa).

Transmembrane regions (helical) follow at residues 11 to 31, 54 to 68, 71 to 91, 102 to 122, 131 to 151, 171 to 191, 313 to 333, 336 to 356, 367 to 387, 421 to 441, 447 to 467, and 534 to 554; these read EAAA…LLLL, AVDG…VGAW, AALA…SYEV, ALLL…LAMQ, FPVL…GIAY, MVAN…GVMG, AFAA…SYFV, LSGK…FFVA, WYLG…AMVY, AWYF…LAIL, IAMV…VPVA, and FVFW…CILL. The ABC transmembrane type-1 1 domain maps to 314–589; sequence FAAVNTIVSY…FPDLISMIAQ (276 aa). The region spanning 623–846 is the ABC transporter 1 domain; it reads ININDATFSW…GTDFNALVCA (224 aa). 658-665 serves as a coordination point for ATP; that stretch reads GVIGSGKS. The span at 881–897 shows a compositional bias: polar residues; sequence DNLKNKVSNNEKPSSTR. The segment at 881-919 is disordered; it reads DNLKNKVSNNEKPSSTRGIKEKKKKPEERKKKRSVQEEE. Basic and acidic residues predominate over residues 904-919; sequence KKPEERKKKRSVQEEE. A run of 6 helical transmembrane segments spans residues 940-960, 980-1000, 1055-1077, 1081-1103, 1149-1169, and 1174-1194; these read GTLI…QIAS, SVVL…FVFV, IAFR…AVMS, WQVL…YYIA, LLDC…WLCL, and LSTF…PGTI. The 271-residue stretch at 945 to 1215 folds into the ABC transmembrane type-1 2 domain; it reads LIILAQTMFQ…GLNLNARMSR (271 aa). An ABC transporter 2 domain is found at 1262-1496; that stretch reads IELVDLKVRY…KSSMFMQLVS (235 aa). 1296–1303 lines the ATP pocket; sequence GRTGSGKS.

Belongs to the ABC transporter superfamily. ABCC family. Conjugate transporter (TC 3.A.1.208) subfamily.

The protein localises to the membrane. In terms of biological role, ABC transporter that may affect phytic acid transport and compartmentalization. May function directly or indirectly in removing phytic acid from the cytosol or in vesicle trafficking. Required for phytic acid accumulation in developing seeds. Phytic acid is the primary storage form of phosphorus in cereal grains and other plant seeds. In Oryza sativa subsp. indica (Rice), this protein is ABC transporter C family member 13.